Here is a 187-residue protein sequence, read N- to C-terminus: Peptide deformylase 1 (187 aa).

The Fe cation site is built by Cys107 and His149. Glu150 is an active-site residue. His153 is a binding site for Fe cation.

The protein belongs to the polypeptide deformylase family. Fe(2+) is required as a cofactor.

It catalyses the reaction N-terminal N-formyl-L-methionyl-[peptide] + H2O = N-terminal L-methionyl-[peptide] + formate. In terms of biological role, removes the formyl group from the N-terminal Met of newly synthesized proteins. Requires at least a dipeptide for an efficient rate of reaction. N-terminal L-methionine is a prerequisite for activity but the enzyme has broad specificity at other positions. In Nostoc sp. (strain PCC 7120 / SAG 25.82 / UTEX 2576), this protein is Peptide deformylase 1.